A 107-amino-acid chain; its full sequence is U-scoloptoxin(18)-Er1a (107 aa).

A signal peptide spans 1–21 (MQRFLCLVACSVVLLVLGIVA).

Belongs to the scoloptoxin-18 family. In terms of processing, contains 5 disulfide bonds. In terms of tissue distribution, expressed by the venom gland.

It is found in the secreted. In Ethmostigmus rubripes (Giant centipede), this protein is U-scoloptoxin(18)-Er1a.